Reading from the N-terminus, the 428-residue chain is Glutamate-1-semialdehyde 2,1-aminomutase (428 aa).

Lys265 is subject to N6-(pyridoxal phosphate)lysine.

It belongs to the class-III pyridoxal-phosphate-dependent aminotransferase family. HemL subfamily. In terms of assembly, homodimer. Pyridoxal 5'-phosphate is required as a cofactor.

It localises to the cytoplasm. The enzyme catalyses (S)-4-amino-5-oxopentanoate = 5-aminolevulinate. It participates in porphyrin-containing compound metabolism; protoporphyrin-IX biosynthesis; 5-aminolevulinate from L-glutamyl-tRNA(Glu): step 2/2. The sequence is that of Glutamate-1-semialdehyde 2,1-aminomutase from Shewanella woodyi (strain ATCC 51908 / MS32).